A 135-amino-acid chain; its full sequence is UPF0355 protein SE_2351 (135 aa).

Belongs to the UPF0355 family.

This chain is UPF0355 protein SE_2351, found in Staphylococcus epidermidis (strain ATCC 12228 / FDA PCI 1200).